The following is a 284-amino-acid chain: Deoxyribonuclease-1 (284 aa).

The signal sequence occupies residues methionine 1–serine 22. N-linked (GlcNAc...) asparagine glycosylation occurs at asparagine 40. Glutamate 100 is an active-site residue. An intrachain disulfide couples cysteine 123 to cysteine 126. The N-linked (GlcNAc...) asparagine glycan is linked to asparagine 128. Histidine 156 is an active-site residue. The cysteines at positions 195 and 231 are disulfide-linked.

It belongs to the DNase I family. Ca(2+) serves as cofactor. Requires Mg(2+) as cofactor.

It localises to the secreted. Its subcellular location is the zymogen granule. The protein resides in the nucleus envelope. The enzyme catalyses Endonucleolytic cleavage to 5'-phosphodinucleotide and 5'-phosphooligonucleotide end-products.. Serum endocuclease secreted into body fluids by a wide variety of exocrine and endocrine organs. Expressed by non-hematopoietic tissues and preferentially cleaves protein-free DNA. Among other functions, seems to be involved in cell death by apoptosis. Binds specifically to G-actin and blocks actin polymerization. Together with DNASE1L3, plays a key role in degrading neutrophil extracellular traps (NETs). NETs are mainly composed of DNA fibers and are released by neutrophils to bind pathogens during inflammation. Degradation of intravascular NETs by DNASE1 and DNASE1L3 is required to prevent formation of clots that obstruct blood vessels and cause organ damage following inflammation. This Sus scrofa (Pig) protein is Deoxyribonuclease-1 (DNASE1).